Reading from the N-terminus, the 278-residue chain is Orotidine 5'-phosphate decarboxylase (278 aa).

K96 acts as the Proton donor in catalysis.

The protein belongs to the OMP decarboxylase family. Type 2 subfamily.

The catalysed reaction is orotidine 5'-phosphate + H(+) = UMP + CO2. Its pathway is pyrimidine metabolism; UMP biosynthesis via de novo pathway; UMP from orotate: step 2/2. In Salinispora tropica (strain ATCC BAA-916 / DSM 44818 / JCM 13857 / NBRC 105044 / CNB-440), this protein is Orotidine 5'-phosphate decarboxylase.